A 204-amino-acid polypeptide reads, in one-letter code: Ribosome maturation factor RimP (204 aa).

The tract at residues 177-204 (NFDESQFDEIQETEGEEADEAETPITRH) is disordered. Positions 181 to 198 (SQFDEIQETEGEEADEAE) are enriched in acidic residues.

The protein belongs to the RimP family.

It localises to the cytoplasm. In terms of biological role, required for maturation of 30S ribosomal subunits. This is Ribosome maturation factor RimP from Cereibacter sphaeroides (strain ATCC 17025 / ATH 2.4.3) (Rhodobacter sphaeroides).